Consider the following 138-residue polypeptide: Putative pre-16S rRNA nuclease (138 aa).

It belongs to the YqgF nuclease family.

The protein localises to the cytoplasm. Its function is as follows. Could be a nuclease involved in processing of the 5'-end of pre-16S rRNA. In Klebsiella pneumoniae subsp. pneumoniae (strain ATCC 700721 / MGH 78578), this protein is Putative pre-16S rRNA nuclease.